A 219-amino-acid chain; its full sequence is NADH-quinone oxidoreductase subunit C (219 aa).

It belongs to the complex I 30 kDa subunit family. NDH-1 is composed of 14 different subunits. Subunits NuoB, C, D, E, F, and G constitute the peripheral sector of the complex.

Its subcellular location is the cell inner membrane. The catalysed reaction is a quinone + NADH + 5 H(+)(in) = a quinol + NAD(+) + 4 H(+)(out). Functionally, NDH-1 shuttles electrons from NADH, via FMN and iron-sulfur (Fe-S) centers, to quinones in the respiratory chain. The immediate electron acceptor for the enzyme in this species is believed to be ubiquinone. Couples the redox reaction to proton translocation (for every two electrons transferred, four hydrogen ions are translocated across the cytoplasmic membrane), and thus conserves the redox energy in a proton gradient. This chain is NADH-quinone oxidoreductase subunit C, found in Methylorubrum extorquens (strain PA1) (Methylobacterium extorquens).